We begin with the raw amino-acid sequence, 78 residues long: Conotoxin 5 (78 aa).

The signal sequence occupies residues 1-22 (MKLTCMMIVTVLFLTAWIFITA). Residues 23–49 (DNSRNGIENLPRMRRHEMKNPKASKLN) constitute a propeptide that is removed on maturation. 3 disulfides stabilise this stretch: C53/C69, C60/C73, and C68/C77.

This sequence belongs to the conotoxin O1 superfamily. As to expression, expressed by the venom duct.

It is found in the secreted. The polypeptide is Conotoxin 5 (Conus imperialis (Imperial cone)).